An 84-amino-acid chain; its full sequence is Putative membrane protein insertion efficiency factor (84 aa).

The protein belongs to the UPF0161 family.

It localises to the cell membrane. Could be involved in insertion of integral membrane proteins into the membrane. The sequence is that of Putative membrane protein insertion efficiency factor from Staphylococcus carnosus (strain TM300).